The chain runs to 118 residues: MRANVLKRKLTLRIKRKKRIRAKISGCENFPRISVFKSNRTLYIQAIDDVKAVTLAAVDGRKLGVKANKEGAKKIAAEFAKTLKVKKIEQAVFDRNGYVYHGVIAALAESLRENGIRL.

Belongs to the universal ribosomal protein uL18 family. As to quaternary structure, part of the 50S ribosomal subunit; part of the 5S rRNA/L5/L18/L25 subcomplex. Contacts the 5S and 23S rRNAs.

In terms of biological role, this is one of the proteins that bind and probably mediate the attachment of the 5S RNA into the large ribosomal subunit, where it forms part of the central protuberance. The protein is Large ribosomal subunit protein uL18 of Campylobacter jejuni subsp. jejuni serotype O:2 (strain ATCC 700819 / NCTC 11168).